The following is a 382-amino-acid chain: MAAQRPLTIALVAGETSGDILGAGLIRALKARVPNARFVGVAGPRMQAEGCEAWYEMEELAVMGIVEVLGRLRRLLHIRADLTRRFTELKPDVFVGIDAPDFNITLEGNLKKQGIKTIHYVSPSVWAWRQKRVFKIGRSTHMVLAFLPFEKAFYDKFNVPCRFIGHTMADAMPLDPDKNAARDVLGIPHDAHCLALLPGSRGAEVEMLSADFLKTAQLLRQRYPDLEVVVPLVNAKRREQFEKIKAEVAPDLAAHLLDGMAREAMIASDAALLASGTAALECMLAKCPMVVGYRMKPFTFWLAKRLVKTEYVSLPNLLAGRELVKELLQEECEPQKLAEALLPLLANGKTSHAMHDTFRELHQQIRCNADEQAADAVLELAQ.

Belongs to the LpxB family.

The catalysed reaction is 2-N,3-O-bis[(3R)-3-hydroxytetradecanoyl]-alpha-D-glucosaminyl 1-phosphate + UDP-2-N,3-O-bis[(3R)-3-hydroxytetradecanoyl]-alpha-D-glucosamine = lipid A disaccharide (E. coli) + UDP + H(+). It catalyses the reaction a lipid X + a UDP-2-N,3-O-bis[(3R)-3-hydroxyacyl]-alpha-D-glucosamine = a lipid A disaccharide + UDP + H(+). It participates in glycolipid biosynthesis; lipid IV(A) biosynthesis; lipid IV(A) from (3R)-3-hydroxytetradecanoyl-[acyl-carrier-protein] and UDP-N-acetyl-alpha-D-glucosamine: step 5/6. Its function is as follows. Condensation of UDP-2,3-diacylglucosamine and 2,3-diacylglucosamine-1-phosphate to form lipid A disaccharide, a precursor of lipid A, a phosphorylated glycolipid that anchors the lipopolysaccharide to the outer membrane of the cell. The protein is Lipid-A-disaccharide synthase of Salmonella agona (strain SL483).